Here is a 405-residue protein sequence, read N- to C-terminus: 3-hydroxy-3-methylglutaryl-coenzyme A reductase (405 aa).

Catalysis depends on charge relay system residues E100 and D310. H400 serves as the catalytic Proton donor.

The protein belongs to the HMG-CoA reductase family.

It carries out the reaction (R)-mevalonate + 2 NADP(+) + CoA = (3S)-3-hydroxy-3-methylglutaryl-CoA + 2 NADPH + 2 H(+). It participates in metabolic intermediate biosynthesis; (R)-mevalonate biosynthesis; (R)-mevalonate from acetyl-CoA: step 3/3. Converts HMG-CoA to mevalonate. This Methanocaldococcus jannaschii (strain ATCC 43067 / DSM 2661 / JAL-1 / JCM 10045 / NBRC 100440) (Methanococcus jannaschii) protein is 3-hydroxy-3-methylglutaryl-coenzyme A reductase (hmgA).